The primary structure comprises 120 residues: Putative monooxygenase GME11364 (120 aa).

Positions 9–99 (VSVHIRLTVD…ILLKPHEVEL (91 aa)) constitute an ABM domain.

It belongs to the LsrG family.

Its pathway is secondary metabolite biosynthesis. Its function is as follows. Putative monooxygenase; part of the gene cluster that mediates the biosynthesis of dibenzodioxocinones such as pestalotiollide B, a novel class of inhibitors against cholesterol ester transfer protein (CEPT). The biosynthesis initiates from condensation of acetate and malonate units catalyzed by the non-reducing PKS pks8/GME11356. Pks8/GME11356 lacks a thioesterase (TE) domain, which is important to the cyclizing of the third ring of atrochrysone carboxylic acid, and the esterase GME11355 might play the role of TE and catalyzes the cyclization reaction of the C ring. The lactamase-like protein GME11357 (or other beta-lactamases in Pestalotiopsis microspora) probably hydrolyzes the thioester bond between the ACP of pks8/GME11356 and the intermediate to release atrochrysone carboxylic acid, which is spontaneously dehydrates to form endocrocin anthrone. Endocrocin anthrone is further converted to emodin via the endocrocin intermediate. Emodin is then oxidized by several enzymes such as the Baeyer-Villiger oxidase GME11358, the oxidoreductase GME11367, the short chain dehydrogenase/reductase GME11373, as well as by other oxidoreductases from the cluster, to modify the A and C rings and open the B ring, and finally yield monodictyphenone. The prenyltransferase GME11375 may catalyze the addition reaction between the C5 side chains and the carbon bone of dibenzodioxocinones. The remaining biochemical reactions to the final product dibenzodioxocinones should be methylation catalyzed by methyltransferase GME11366 and reduction and lactonization reaction catalyzed by a series of oxidordeuctases. This Pestalotiopsis microspora protein is Putative monooxygenase GME11364.